We begin with the raw amino-acid sequence, 398 residues long: Cell adhesion molecule 3 (398 aa).

The N-terminal stretch at 1–24 is a signal peptide; that stretch reads MGAPAASLLLLLLLFACCWAPGGA. Residues 25–126 enclose the Ig-like V-type domain; sequence NLSQDDSQPW…VRTAKSLVTV (102 aa). Topologically, residues 25 to 330 are extracellular; the sequence is NLSQDDSQPW…PVPSSSSTYH (306 aa). 3 disulfide bridges follow: cysteine 50/cysteine 110, cysteine 152/cysteine 209, and cysteine 254/cysteine 299. 2 consecutive Ig-like C2-type domains span residues 130–228 and 233–315; these read PQKP…QRIE and PTAM…YTLN. The N-linked (GlcNAc...) asparagine glycan is linked to asparagine 290. Residues 331 to 351 form a helical membrane-spanning segment; sequence AIIGGIVAFIVFLLLIMLIFL. Over 352 to 398 the chain is Cytoplasmic; sequence GHYLIRHKGTYLTHEAKGSDDAPDADTAIINAEGGQSGGDDKKEYFI. Positions 367 to 398 are disordered; sequence AKGSDDAPDADTAIINAEGGQSGGDDKKEYFI. Serine 388 carries the post-translational modification Phosphoserine.

The protein belongs to the nectin family. As to quaternary structure, homodimer. Can form trans-heterodimers with NECTIN3. Interacts with EPB41L1, DLG3, PALS2 and CASK. Isoform 1 is expressed mainly in adult and fetal brain. Isoform 2 is highly expressed in adult brain and weakly expressed in placenta. In brain, Isoform 2 is highly expressed in cerebellum.

It is found in the cell membrane. Its subcellular location is the cell junction. In terms of biological role, involved in cell-cell adhesion. Has both calcium-independent homophilic cell-cell adhesion activity and calcium-independent heterophilic cell-cell adhesion activity with IGSF4, NECTIN1 and NECTIN3. Interaction with EPB41L1 may regulate structure or function of cell-cell junctions. This is Cell adhesion molecule 3 (CADM3) from Homo sapiens (Human).